Consider the following 369-residue polypeptide: Isopentenyl-diphosphate delta-isomerase (369 aa).

Substrate is bound at residue 9–10; the sequence is RK. FMN-binding positions include Thr65, 66–68, Ser96, and Asn125; that span reads GMT. 96–98 is a binding site for substrate; sequence SQR. Gln160 is a binding site for substrate. Glu161 contacts Mg(2+). Residues Lys193, Ser218, Thr223, 275–277, and 296–297 each bind FMN; these read GVR and AL.

This sequence belongs to the IPP isomerase type 2 family. As to quaternary structure, homooctamer. Dimer of tetramers. The cofactor is FMN. NADPH is required as a cofactor. Requires Mg(2+) as cofactor.

The protein localises to the cytoplasm. It carries out the reaction isopentenyl diphosphate = dimethylallyl diphosphate. In terms of biological role, involved in the biosynthesis of isoprenoids. Catalyzes the 1,3-allylic rearrangement of the homoallylic substrate isopentenyl (IPP) to its allylic isomer, dimethylallyl diphosphate (DMAPP). The sequence is that of Isopentenyl-diphosphate delta-isomerase from Sulfurisphaera tokodaii (strain DSM 16993 / JCM 10545 / NBRC 100140 / 7) (Sulfolobus tokodaii).